The primary structure comprises 103 residues: Small ribosomal subunit protein uS14c (103 aa).

The interval Ser-26–Asn-56 is disordered.

The protein belongs to the universal ribosomal protein uS14 family. In terms of assembly, part of the 30S ribosomal subunit.

Its subcellular location is the plastid. The protein localises to the chloroplast. Binds 16S rRNA, required for the assembly of 30S particles. The protein is Small ribosomal subunit protein uS14c of Saccharum officinarum (Sugarcane).